The sequence spans 379 residues: Stimulator of interferon genes protein (379 aa).

The Cytoplasmic segment spans residues 1–17 (MPYSNLHPSIPRPRSYR). The segment at 1–190 (MPYSNLHPSI…MFNQLHNNML (190 aa)) is mediates interaction with ZDHHC1 and ZDHHC11. Residues 18-34 (FKLAAFVLLVGSLMSLW) traverse the membrane as a helical segment. Topologically, residues 35–44 (MTGEPPSHTL) are lumenal. The helical transmembrane segment at 45–69 (HYLALHVASQQLGLLLKKLCCLAEE) threads the bilayer. The Cytoplasmic segment spans residues 70–91 (LCHVQSRYQGSYWKAVRACVGS). The S-palmitoyl cysteine moiety is linked to residue C88. A helical transmembrane segment spans residues 92–106 (PICFMALILLSFYFY). The Lumenal segment spans residues 107-116 (CSLENTSDLR). Residues 117 to 134 (LAWHLGILVLSKSLSMTL) traverse the membrane as a helical segment. Topologically, residues 135-379 (DLQSLAPAEV…QPLPLRTDLI (245 aa)) are cytoplasmic. K151 participates in a covalent cross-link: Glycyl lysine isopeptide (Lys-Gly) (interchain with G-Cter in ubiquitin). Residues 153–340 (FNVAHGLAWS…RHIRQEEKEE (188 aa)) form a cyclic dinucleotide-binding domain (CBD) region. 162 to 167 (SYYIGY) is a 2',3'-cGAMP binding site. Residue G166 coordinates 3',3'-c-di-GMP. Position 167 (Y167) interacts with 2',3'-cUAMP. K236 participates in a covalent cross-link: Glycyl lysine isopeptide (Lys-Gly) (interchain with G-Cter in ubiquitin). Residue R238 coordinates 2',3'-cUAMP. 2',3'-cGAMP is bound by residues 238–241 (RAYS) and T263. Residues 238–241 (RAYS) and T263 contribute to the 3',3'-c-di-GMP site. A Phosphoserine modification is found at S241. Residue T263 participates in 2',3'-cUAMP binding. K338 participates in a covalent cross-link: Glycyl lysine isopeptide (Lys-Gly) (interchain with G-Cter in SUMO). The interval 340-379 (EVTMSGPPTSVAPRPSLLSQEPRLLISGMEQPLPLRTDLI) is C-terminal tail (CTT). At S355 the chain carries Phosphoserine. S358 and S366 each carry phosphoserine; by TBK1. The short motif at 363–366 (LLIS) is the pLxIS motif element.

This sequence belongs to the STING family. As to quaternary structure, homodimer; forms a homodimer in absence of cyclic nucleotide (c-di-GMP or cGAMP); 'Lys-63'-linked ubiquitination at Lys-151 is required for homodimerization. Homotetramer; in presence of cyclic nucleotide (c-di-GMP or cGAMP), forms tetramers and higher-order oligomers through side-by-side packing. Interacts (when phosphorylated) with IRF3; following activation and phosphorylation on the pLxIS motif by TBK1, recruits IRF3. Interacts with RIGI, MAVS and SSR2. Interacts with RNF5 and TRIM56. Interacts with TBK1; when homodimer, leading to subsequent production of IFN-beta. Interacts with IFIT1 and IFIT2. Interacts with TRIM29; this interaction induces STING1 ubiquitination and subsequent degradation. Associates with the MHC-II complex. Interacts with STEEP1; interaction takes place upon cGAMP-activation and STING1 phosphorylation by MAP3K7/TAK1 and promotes STING1 translocation to COPII vesicles. Interacts with SEC24A, SEC24B and SEC24C; promoting translocation to COPII vesicles. Interacts (when ubiquitinated) with SQSTM1; leading to relocalization to autophagosomes. Interacts with SURF4. Interacts with HNRNPA2B1. Interacts with ZDHHC1; ZDHHC1 constitutively interacts with STING1 and in presence of DNA viruses activates it by promoting its cGAMP-induced oligomerization and the recruitment of downstream signaling components. Interacts with ZDHHC11; in presence of DNA viruses promotes the recruitment of IRF3 to STING1. Interacts with TOMM70. Interacts with TAB1; promoting recruitment of TAB1 to the endoplasmic reticulum membrane and subsequent activation of MAP3K7/TAK1. Interacts (via transmembrane domain) with TMEM203. Interacts with DDX41. In terms of processing, phosphorylation by TBK1 leads to activation and production of IFN-beta. Following cyclic nucleotide (c-di-GMP or cGAMP)-binding, activation and translocation from the endoplasmic reticulum, STING1 is phosphorylated by TBK1 at Ser-366 in the pLxIS motif. The phosphorylated pLxIS motif constitutes an IRF3-binding motif, leading to recruitment of the transcription factor IRF3 to induce type-I interferons and other cytokines. Phosphorylated on tyrosine residues upon MHC-II aggregation. Dephosphorylation by PPP6C leads to inactivation and decreased production of IFN-beta. Phosphorylation at Ser-358 is also required to activate IRF3. Phosphorylation at Ser-355 by MAP3K7/TAK1 facilitates its interaction with STEEP1, promoting STING1 translocation to COPII vesicles. Post-translationally, ubiquitinated. Ubiquitinated via 'Lys-63'-linked ubiquitin chains in response to double-stranded DNA treatment, leading to relocalization to autophagosomes and subsequent degradation; this process is dependent on SQSTM1. 'Lys-63'-linked ubiquitination mediated by TRIM56 at Lys-151 promotes homodimerization and recruitment of the antiviral kinase TBK1 and subsequent production of IFN-beta. 'Lys-48'-linked polyubiquitination at Lys-151 occurring after viral infection is mediated by RNF5 and leads to proteasomal degradation. 'Lys-11'-linked polyubiquitination at Lys-151 by RNF26 leads to stabilize STING1: it protects STING1 from RNF5-mediated 'Lys-48'-linked polyubiquitination. 'Lys-33'-linked and 'Lys-48'-linked deubiquitinated by USP20; leading to its stabilization and promotion of innate antiviral response. 'Lys-48'-linked deubiquitinated by USP44; leading to its stabilization and promotion of innate antiviral response. Deubiquitinated by USP13; leading to inhibition of innate antiviral response. 'Lys-63'-linked deubiquitinated by USP49; leading to inhibition of the subsequent recruitment of TBK1 to the signaling complex. 'Lys-63'-linked ubiquitination mediated by RNF39 promotes the activation of the cGAS-STING pathway. Sumoylated at Lys-338 by TRIM38 during the early phase of viral infection, promoting its stability by preventing its relocalization to autophagosomes and subsequent degradation. Desumoylated by SENP2 during the late phase of viral infection. In terms of processing, palmitoylation takes place in the Golgi apparatus and creates a platform for the recruitment of TBK1.

Its subcellular location is the endoplasmic reticulum membrane. The protein resides in the cytoplasm. The protein localises to the perinuclear region. It is found in the endoplasmic reticulum-Golgi intermediate compartment membrane. It localises to the golgi apparatus membrane. Its subcellular location is the cytoplasmic vesicle. The protein resides in the autophagosome membrane. The protein localises to the mitochondrion outer membrane. It is found in the cell membrane. It catalyses the reaction H(+)(in) = H(+)(out). With respect to regulation, in contrast to mouse protein, not activated by anticancer molecule 5,6-dimethylxanthenone 4-acetic acid (DMXAA). Its function is as follows. Facilitator of innate immune signaling that acts as a sensor of cytosolic DNA from bacteria and viruses and promotes the production of type I interferon (IFN-alpha and IFN-beta). Innate immune response is triggered in response to non-CpG double-stranded DNA from viruses and bacteria delivered to the cytoplasm. Acts by binding cyclic dinucleotides: recognizes and binds cyclic di-GMP (c-di-GMP), a second messenger produced by bacteria, cyclic UMP-AMP (2',3'-cUAMP), and cyclic GMP-AMP (cGAMP), a messenger produced by CGAS in response to DNA virus in the cytosol. Upon binding to c-di-GMP, cUAMP or cGAMP, STING1 oligomerizes, translocates from the endoplasmic reticulum and is phosphorylated by TBK1 on the pLxIS motif, leading to recruitment and subsequent activation of the transcription factor IRF3 to induce expression of type I interferon and exert a potent anti-viral state. Exhibits 2',3' phosphodiester linkage-specific ligand recognition: can bind both 2'-3' linked cGAMP (2'-3'-cGAMP) and 3'-3' linked cGAMP but is preferentially activated by 2'-3' linked cGAMP. The preference for 2'-3'-cGAMP, compared to other linkage isomers is probably due to the ligand itself, whichs adopts an organized free-ligand conformation that resembles the STING1-bound conformation and pays low energy costs in changing into the active conformation. In addition to promote the production of type I interferons, plays a direct role in autophagy. Following cGAMP-binding, STING1 buds from the endoplasmic reticulum into COPII vesicles, which then form the endoplasmic reticulum-Golgi intermediate compartment (ERGIC). The ERGIC serves as the membrane source for WIPI2 recruitment and LC3 lipidation, leading to formation of autophagosomes that target cytosolic DNA or DNA viruses for degradation by the lysosome. Promotes autophagy by acting as a proton channel that directs proton efflux from the Golgi to facilitate MAP1LC3B/LC3B lipidation. The autophagy- and interferon-inducing activities can be uncoupled and autophagy induction is independent of TBK1 phosphorylation. Autophagy is also triggered upon infection by bacteria: following c-di-GMP-binding, which is produced by live Gram-positive bacteria, promotes reticulophagy. May be involved in translocon function, the translocon possibly being able to influence the induction of type I interferons. May be involved in transduction of apoptotic signals via its association with the major histocompatibility complex class II (MHC-II). In Rattus norvegicus (Rat), this protein is Stimulator of interferon genes protein.